The primary structure comprises 248 residues: Proteasome subunit alpha (248 aa).

Ser-2 is modified (N-acetylserine; partial).

This sequence belongs to the peptidase T1A family. As to quaternary structure, the 20S proteasome core is composed of 14 alpha and 14 beta subunits that assemble into four stacked heptameric rings, resulting in a barrel-shaped structure. The two inner rings, each composed of seven catalytic beta subunits, are sandwiched by two outer rings, each composed of seven alpha subunits. The catalytic chamber with the active sites is on the inside of the barrel. Has a gated structure, the ends of the cylinder being occluded by the N-termini of the alpha-subunits. Is capped by the proteasome-associated ATPase, ARC.

It is found in the cytoplasm. It functions in the pathway protein degradation; proteasomal Pup-dependent pathway. With respect to regulation, the formation of the proteasomal ATPase ARC-20S proteasome complex, likely via the docking of the C-termini of ARC into the intersubunit pockets in the alpha-rings, may trigger opening of the gate for substrate entry. Interconversion between the open-gate and close-gate conformations leads to a dynamic regulation of the 20S proteasome proteolysis activity. In terms of biological role, component of the proteasome core, a large protease complex with broad specificity involved in protein degradation. This is Proteasome subunit alpha from Mycobacterium tuberculosis (strain CDC 1551 / Oshkosh).